We begin with the raw amino-acid sequence, 2629 residues long: MEKLCGYVPVHPDILSLKNRCLTMLSDIQPLEKIHGQRSVNPDILSLENRCLTLLPDLQPMEKIHGQRSVHPDILSSENRCLTLLPDLQSLEKLCGHMSSHPDVLSLENRCLATLPTVKRTVSSGPLLQCLHRSHTAQADLRDPNFRNCLFPEPPTIEAPCFLKELDLPTGPRALKSMSATARVQEVALGQRCVSEGKELQEEKESAEVPMPLYSLSLGGEEEEVVGAPVLKLTSGDSDSHPETTDQILQEKKMALLTLLCSAMASSVNVKDASDPTRASIHEVCSALAPLEPEFILKASLYARQQLNLRDIANIVLAVAALLPACRPHVRRYYSAIVHLPSDWIQVAEFYQSLAEGDEKKLVPLPACLRAAMTDKFAQFDEYQLAKYNPRKHRSKTRSRQPPRPQRTKPPFSESGKCFPKSVWPLKNEQISFEAAYNAVSEKKRLPRFTLKKLVEQLHIHEPAQHVQALLGYRYPSTLELFSRSHLPGPWDSSRAGQRMKLQRPETWERELSLRGNRASVWEELIDNGKLPFMAMLRNLCNLLRTGISAHHHELVLQRLQHEKSVIHSRQFPFRFLNAHDSLDRLEAQLRSKASPFPSNTTLMKRIMIRNSKKIKRPANPRYLCTLTQRQLRAAMAIPVMYEHLKREKLRLHKARQWTCDLELLERYRQALETAVNISVKHNLPPLPGRTLLVYLTDANANRLCPKSHLQGPPLNYVLLLIGMMMARAEQTTVWLCGTGTVKTPVLTADEGILKTAIKLQAQVQELEENDEWPLETFEKYLLSLAVRRTPIDRVILFGQRMDTELLNVAKQIIWQHVNSKCLFVSVLLRKMQYMSPNLNPNDVTLSGCTDGILKFIAEHGASRLLEHVGQLDKIFKIPPPPGKTKVSPLRPLEENNPGPFVPISQHGWRNIRLFISSTFRDMHGERDLLMRSVLPALQARAFPHRISLHAIDLRWGITEEETRRNRQLEVCLGEVENSQLFVGILGSRYGYTPPSYDLPDHPHFHWTQRYPSGRSVTEMEVMQFLNRGQRSEPSDQALIYFRDPGFLSSVPDVWKPDFISESEEAAHRVSELKRFLQEQKEVTCRRYSCEWGGVAAGRPYTGGLEEFGQLVLQDVWSVIQKRYLQPGAQLEQPGSISEEDLIQASFQQLKSPPSPARPRLLQDTVQQLMLPHGRLSLVIGQAGQGKTAFLASLVSALKVPDQPNVAPFVFFHFSAARPDQCLAFNLLRRLCTHLHQKLGEPSALPSTYRGLVWELQQKLLLKSAQWLQPGQTLVLIIDGADKLVDHNGQLISDWIPKSLPRRVHLVLSVSSDSGLGETLQQSQSAYVVALGSLVPSSRAQLVREELALYGKRLEESPFNNQMRLLLAKQGSSLPLYLHLVTDYLRLFTLYEQVSERLRTLPATLPLLLQHILSTLEQEHGHNVLPQALTALEVTHSGLTVDQLHAVLSTWLTLPKETKSWEEAVAASHSGNLYPLAPFAYLVQSLRSLLGEGPVERPGARLCLSDGPLRTAVKRRYGKRLGLEKTAHVLIAAHLWKMCDPDASGTFRSCPPEALKDLPYHLLQSGNHGLLAKFLTNLHVVAAYLEVGLVPDLLEAYELYASSKPEVNQKLPEADVAVFHNFLKQQASLLTQYPLLLLQQAASQPEESPVCCQAPLLTQRWHNQCILKWINKPQTLKGQQSLSLPISSSPTAVAFSPNGQRAAVGTAGGTIYLLNLRTWQEEKALVSGCDGISSFAFLSDTALFLTTFDGLLELWDLQHGCWVFQTKAHQYQITGCCLSPDRRLLATVCLGGYVKLWDTVQGQLAFQYTHPKSLNCITFHPEGQVVATGNWSGIVTFFQADGLKVTKELGGPGPSVRTLAFSAPGKVVALGRIDGTVELWAWQEGTRLAAFPAQCGGVSTVLFLHAGGRFLTAGEDGKAQLWSGFLGRPRGCLGSLYLSPALSVALNPDGDQVAVGYRGDGIKIYRISSGPQEAQCQELNVAVSALVWLSPSVLVSGAEDGSLHGWMLRRNSLQSLWLSSVCQKPVLGLAASQEFLASASEDFTVRLWPRQLLTQPHAVEELPCAAELRGHEGPVCCCSFSPDGRILATAGRDRNLLCWDVKVAQAPLLIHTFSSCHRDWITGCTWTKDNILISCSSDGSVGLWNPEAGQQLGQFPGHQSAVSAVVAVEEHIVSVSRDGTLKVWDRQGVELTSIPAHSGPISQCAAALEPRPAGQPGSELMVVTVGLDGATKLWHPLLVCQIHTLQGHSGPVTAAAASEASGLLLTSDNSSVRLWQIPKEADDTCKPRSSAVITAVAWAPDGSLVVSGNEAGELTLWQKAQAVATARAPGRVSDLIWCSANAFFVLSANENVSEWQVELRKGSTCTNFRLYLKRVLQEDLGVLTGMALAPDGQSLILMKEDVELLQMKPGSTPSSICRRYAVHSSILCTSKDYGLFYLQQGNSGSLSILEQEESGKFEKTLDFNLNLNNPNGSPVSITQAEPESGSSLLCATSDGMLWNLSECTPEGEWVVDNIWQKKSRNPKSRTPGTDSSPGLFCMDSWVEPTHLKARQCKKIHLGSVTALHVLPGLLVTASEDRDVKLWERPSMQLLGLFRCEGPVSCLEPWMEPSSPLQLAVGDAQGNLYFLSWE.

TEP1 N-terminal repeat units lie at residues 1–30, 31–60, 61–90, and 91–120; these read MEKLCGYVPVHPDILSLKNRCLTMLSDIQP, LEKIHGQRSVNPDILSLENRCLTLLPDLQP, MEKIHGQRSVHPDILSSENRCLTLLPDLQS, and LEKLCGHMSSHPDVLSLENRCLATLPTVKR. The TROVE domain occupies 231 to 689; sequence LKLTSGDSDS…VKHNLPPLPG (459 aa). Positions 390–401 are enriched in basic residues; that stretch reads PRKHRSKTRSRQ. The disordered stretch occupies residues 390 to 416; it reads PRKHRSKTRSRQPPRPQRTKPPFSESG. An NACHT domain is found at 1175–1582; it reads RLSLVIGQAG…KFLTNLHVVA (408 aa). 1181–1188 is a binding site for ATP; that stretch reads GQAGQGKT. WD repeat units lie at residues 1424–1461, 1685–1724, 1727–1765, 1768–1807, 1809–1848, 1851–1890, 1893–1934, 1936–1975, 1978–2016, 2019–2058, 2070–2109, 2116–2154, 2157–2194, 2200–2244, 2247–2285, 2288–2327, 2329–2365, 2378–2427, 2470–2510, 2555–2592, and 2594–2628; these read VLPQALTALEVTHSGLTVDQLHAVLSTWLTLPKETKSW, PISSSPTAVAFSPNGQRAAVGTAGGTIYLLNLRTWQEEKA, SGCDGISSFAFLSDTALFLTTFDGLLELWDLQHGCWVFQ, AHQYQITGCCLSPDRRLLATVCLGGYVKLWDTVQGQLAFQ, THPKSLNCITFHPEGQVVATGNWSGIVTFFQADGLKVTKE, GPGPSVRTLAFSAPGKVVALGRIDGTVELWAWQEGTRLAA, AQCG…GCLG, LYLSPALSVALNPDGDQVAVGYRGDGIKIYRISSGPQEAQ, ELNVAVSALVWLSPSVLVSGAEDGSLHGWMLRRNSLQSL, SSVCQKPVLGLAASQEFLASASEDFTVRLWPRQLLTQPHA, GHEGPVCCCSFSPDGRILATAGRDRNLLCWDVKVAQAPLL, CHRDWITGCTWTKDNILISCSSDGSVGLWNPEAGQQLGQ, GHQSAVSAVVAVEEHIVSVSRDGTLKVWDRQGVELTSI, PISQ…QIHT, GHSGPVTAAAASEASGLLLTSDNSSVRLWQIPKEADDTC, RSSAVITAVAWAPDGSLVVSGNEAGELTLWQKAQAVATAR, PGRVSDLIWCSANAFFVLSANENVSEWQVELRKGSTC, EDLG…SSIL, PNGS…GEWV, IHLGSVTALHVLPGLLVTASEDRDVKLWERPSMQLLGL, and RCEGPVSCLEPWMEPSSPLQLAVGDAQGNLYFLSW.

As to quaternary structure, associated component of the telomerase holoenzyme complex. Component of the vault ribonucleoprotein particle, at least composed of MVP, PARP4 and one or more vault RNAs (vRNAs). Binds to VAULTRC1, VAULTRC2 and VAULTRC4/hvg4 vRNAs.

Its subcellular location is the nucleus. It is found in the chromosome. The protein localises to the telomere. Its function is as follows. Component of the telomerase ribonucleoprotein complex that is essential for the replication of chromosome termini. Also a component of the ribonucleoprotein vaults particle, a multi-subunit structure involved in nucleo-cytoplasmic transport. Responsible for the localizing and stabilizing vault RNA (vRNA) association in the vault ribonucleoprotein particle. Binds to TERC. The polypeptide is Telomerase protein component 1 (Tep1) (Rattus norvegicus (Rat)).